Consider the following 109-residue polypeptide: Nucleoid-associated protein VC_1055 (109 aa).

The tract at residues 1–22 is disordered; that stretch reads MFGKGGMGNLMKQAQQMQERMQ.

Belongs to the YbaB/EbfC family. Homodimer.

Its subcellular location is the cytoplasm. It is found in the nucleoid. In terms of biological role, binds to DNA and alters its conformation. May be involved in regulation of gene expression, nucleoid organization and DNA protection. This Vibrio cholerae serotype O1 (strain ATCC 39315 / El Tor Inaba N16961) protein is Nucleoid-associated protein VC_1055.